Consider the following 484-residue polypeptide: UDP-N-acetylmuramoyl-L-alanyl-D-glutamate--2,6-diaminopimelate ligase (484 aa).

Ser-29 contacts UDP-N-acetyl-alpha-D-muramoyl-L-alanyl-D-glutamate. 108–114 (GTSGKTS) lines the ATP pocket. UDP-N-acetyl-alpha-D-muramoyl-L-alanyl-D-glutamate-binding positions include 150–151 (TT), Ser-177, Gln-183, and Arg-185. Lys-217 is subject to N6-carboxylysine. Meso-2,6-diaminopimelate-binding positions include Arg-381, 405-408 (DNPR), Gly-453, and Glu-457. The Meso-diaminopimelate recognition motif motif lies at 405–408 (DNPR).

The protein belongs to the MurCDEF family. MurE subfamily. It depends on Mg(2+) as a cofactor. Carboxylation is probably crucial for Mg(2+) binding and, consequently, for the gamma-phosphate positioning of ATP.

It is found in the cytoplasm. It catalyses the reaction UDP-N-acetyl-alpha-D-muramoyl-L-alanyl-D-glutamate + meso-2,6-diaminopimelate + ATP = UDP-N-acetyl-alpha-D-muramoyl-L-alanyl-gamma-D-glutamyl-meso-2,6-diaminopimelate + ADP + phosphate + H(+). It participates in cell wall biogenesis; peptidoglycan biosynthesis. In terms of biological role, catalyzes the addition of meso-diaminopimelic acid to the nucleotide precursor UDP-N-acetylmuramoyl-L-alanyl-D-glutamate (UMAG) in the biosynthesis of bacterial cell-wall peptidoglycan. The protein is UDP-N-acetylmuramoyl-L-alanyl-D-glutamate--2,6-diaminopimelate ligase of Mesorhizobium japonicum (strain LMG 29417 / CECT 9101 / MAFF 303099) (Mesorhizobium loti (strain MAFF 303099)).